Consider the following 110-residue polypeptide: Large ribosomal subunit protein uL22 (110 aa).

Positions 85-95 (RGTASKIRKPT) are enriched in basic residues. Residues 85-110 (RGTASKIRKPTSHVMVEVSKAQKKEA) form a disordered region.

Belongs to the universal ribosomal protein uL22 family. As to quaternary structure, part of the 50S ribosomal subunit.

Functionally, this protein binds specifically to 23S rRNA; its binding is stimulated by other ribosomal proteins, e.g. L4, L17, and L20. It is important during the early stages of 50S assembly. It makes multiple contacts with different domains of the 23S rRNA in the assembled 50S subunit and ribosome. The globular domain of the protein is located near the polypeptide exit tunnel on the outside of the subunit, while an extended beta-hairpin is found that lines the wall of the exit tunnel in the center of the 70S ribosome. This is Large ribosomal subunit protein uL22 from Campylobacter curvus (strain 525.92).